We begin with the raw amino-acid sequence, 736 residues long: RNA-binding protein RMD9-like, mitochondrial (736 aa).

Disordered stretches follow at residues 1 to 28 (MFRF…KTNS), 124 to 148 (PRRS…HPNT), and 566 to 618 (NRGI…GTPV). A mitochondrion-targeting transit peptide spans 1-79 (MFRFAQPANV…HFKNQFSSRN (79 aa)). Over residues 125-140 (RRSNMRNNGNNNMNNG) the composition is skewed to low complexity. Residues 566-578 (NRGISSSSPMSAV) show a composition bias toward polar residues. A compositionally biased stretch (low complexity) spans 579–596 (NSLAPSTTNTPSPSLSPI). Positions 602–613 (LSSARNTPNKIW) are enriched in polar residues.

This sequence belongs to the RMD9 family. Monomer. In terms of processing, phosphorylated. Phosphorylation promotes binding to RNA.

It localises to the mitochondrion inner membrane. May be involved in the processing or stability of mitochondrial mRNAs. The polypeptide is RNA-binding protein RMD9-like, mitochondrial (Candida glabrata (strain ATCC 2001 / BCRC 20586 / JCM 3761 / NBRC 0622 / NRRL Y-65 / CBS 138) (Yeast)).